Reading from the N-terminus, the 277-residue chain is MRSIFIILIFLLFLSSCSEEKAQDKNHEEKQIIEHETQNNETSKATNQEAVNSENTTESIVPANDNNQTDEVSTPASQKQKNPAIKAVKVTFKVDDNDMVLGNKKSNVIVVEYFSPTCPHCAYYHQTIFPELKKKYIDTNKIAYVVREFIATKQDLDAAILARCKGDTNSFTQLHNIILIQQDKWAYSNKYRELLTDIGQLGGISPEEYKQCLNNDKITAILIANTNFVAKAPQFIGTPSFFVNGVQTGNYSIDTISTAVDKALEEQKEKAKNEMSL.

The first 22 residues, 1-22, serve as a signal peptide directing secretion; it reads MRSIFIILIFLLFLSSCSEEKA. Residues 34 to 80 form a disordered region; that stretch reads EHETQNNETSKATNQEAVNSENTTESIVPANDNNQTDEVSTPASQKQ. Polar residues predominate over residues 39–80; the sequence is NNETSKATNQEAVNSENTTESIVPANDNNQTDEVSTPASQKQ. Positions 76–265 constitute a Thioredoxin domain; it reads ASQKQKNPAI…ISTAVDKALE (190 aa). Residues cysteine 118 and cysteine 121 are joined by a disulfide bond.

This sequence belongs to the thioredoxin family. DsbA subfamily.

The protein resides in the periplasm. May be required for disulfide bond formation in some proteins. This Rickettsia conorii (strain ATCC VR-613 / Malish 7) protein is Putative protein-disulfide oxidoreductase RC0029.